The chain runs to 444 residues: Tol-Pal system protein TolB (444 aa).

The first 26 residues, 1 to 26, serve as a signal peptide directing secretion; that stretch reads MTLFRTLAPMGLALALLLPAAVPAAA. Residues 281–310 show a composition bias toward polar residues; the sequence is IYTLDTGSGTRRQLTNSPSIETAPSYSPDG. The segment at 281–311 is disordered; it reads IYTLDTGSGTRRQLTNSPSIETAPSYSPDGS.

It belongs to the TolB family. As to quaternary structure, the Tol-Pal system is composed of five core proteins: the inner membrane proteins TolA, TolQ and TolR, the periplasmic protein TolB and the outer membrane protein Pal. They form a network linking the inner and outer membranes and the peptidoglycan layer.

It is found in the periplasm. Its function is as follows. Part of the Tol-Pal system, which plays a role in outer membrane invagination during cell division and is important for maintaining outer membrane integrity. The polypeptide is Tol-Pal system protein TolB (Cereibacter sphaeroides (strain ATCC 17029 / ATH 2.4.9) (Rhodobacter sphaeroides)).